Consider the following 151-residue polypeptide: UPF0208 membrane protein SG1605 (151 aa).

Transmembrane regions (helical) follow at residues phenylalanine 46–alanine 64 and glycine 70–leucine 90.

It belongs to the UPF0208 family.

It localises to the cell inner membrane. This is UPF0208 membrane protein SG1605 from Sodalis glossinidius (strain morsitans).